A 157-amino-acid chain; its full sequence is Ribosome maturation factor RimP (157 aa).

It belongs to the RimP family.

It localises to the cytoplasm. In terms of biological role, required for maturation of 30S ribosomal subunits. The protein is Ribosome maturation factor RimP of Bacillus pumilus (strain SAFR-032).